A 37-amino-acid chain; its full sequence is Large ribosomal subunit protein bL36B (37 aa).

Belongs to the bacterial ribosomal protein bL36 family.

This Kineococcus radiotolerans (strain ATCC BAA-149 / DSM 14245 / SRS30216) protein is Large ribosomal subunit protein bL36B.